The following is a 368-amino-acid chain: Glutamate 5-kinase (368 aa).

Residue Lys11 coordinates ATP. 3 residues coordinate substrate: Ser51, Asp138, and Asn150. Residues 170–171 (TD) and 212–218 (TGGMATK) each bind ATP. The 79-residue stretch at 276-354 (AGEIIVDHGA…QQISQILGYE (79 aa)) folds into the PUA domain.

The protein belongs to the glutamate 5-kinase family.

It is found in the cytoplasm. The enzyme catalyses L-glutamate + ATP = L-glutamyl 5-phosphate + ADP. It functions in the pathway amino-acid biosynthesis; L-proline biosynthesis; L-glutamate 5-semialdehyde from L-glutamate: step 1/2. Functionally, catalyzes the transfer of a phosphate group to glutamate to form L-glutamate 5-phosphate. The polypeptide is Glutamate 5-kinase (Photorhabdus laumondii subsp. laumondii (strain DSM 15139 / CIP 105565 / TT01) (Photorhabdus luminescens subsp. laumondii)).